A 688-amino-acid polypeptide reads, in one-letter code: Putative proline--tRNA ligase YHR020W (688 aa).

S149 carries the post-translational modification Phosphoserine. T170 carries the phosphothreonine modification. Positions 631–650 are disordered; it reads ESSAKKDDGEEFEEDDKAPS. At S655 the chain carries Phosphoserine.

The protein belongs to the class-II aminoacyl-tRNA synthetase family.

The enzyme catalyses tRNA(Pro) + L-proline + ATP = L-prolyl-tRNA(Pro) + AMP + diphosphate. This chain is Putative proline--tRNA ligase YHR020W, found in Saccharomyces cerevisiae (strain ATCC 204508 / S288c) (Baker's yeast).